The chain runs to 60 residues: Large ribosomal subunit protein bL33 (60 aa).

Belongs to the bacterial ribosomal protein bL33 family.

The protein is Large ribosomal subunit protein bL33 of Chlorobium limicola (strain DSM 245 / NBRC 103803 / 6330).